The chain runs to 238 residues: Sugar fermentation stimulation protein homolog (238 aa).

Belongs to the SfsA family.

This Histophilus somni (strain 2336) (Haemophilus somnus) protein is Sugar fermentation stimulation protein homolog.